The sequence spans 212 residues: GTP-binding nuclear protein Ran (212 aa).

The Small GTPase Ran-type domain occupies 3 to 167 (EKEQIKLVLV…VWLTSKLLGN (165 aa)). Residue 14-21 (DGGVGKTT) participates in GTP binding. Residues 33–41 (PRYIPTLGV) are switch-I. Residues G64, 118–121 (NKVD), and 146–148 (SAK) each bind GTP. Residues 64-80 (GQEKFGGLRDGYYIQGN) form a switch-II region.

This sequence belongs to the small GTPase superfamily. Ran family. Found in a nuclear export complex with RanGTP, exportin and pre-miRNA.

The protein localises to the nucleus. Functionally, GTP-binding protein involved in nucleocytoplasmic transport. Required for the import of protein into the nucleus and also for RNA export. Involved in chromatin condensation and control of cell cycle. This Dictyostelium discoideum (Social amoeba) protein is GTP-binding nuclear protein Ran (ranA).